The following is a 415-amino-acid chain: Arrestin red cell isoform 3 (415 aa).

Belongs to the arrestin family.

The protein resides in the cytoplasm. The polypeptide is Arrestin red cell isoform 3 (Oncorhynchus mykiss (Rainbow trout)).